Here is a 368-residue protein sequence, read N- to C-terminus: Chaperone protein DnaJ (368 aa).

The J domain maps to 5 to 75; sequence DFYKILGVEK…TKRKQYDKFG (71 aa). A CR-type zinc finger spans residues 139-222; that stretch reads GKEISQKLTK…CRGKTIVETK (84 aa). Zn(2+) is bound by residues Cys-152, Cys-155, Cys-169, Cys-172, Cys-196, Cys-199, Cys-210, and Cys-213. CXXCXGXG motif repeat units lie at residues 152–159, 169–176, 196–203, and 210–217; these read CDNCKGSG, CYNCQGRG, CSVCLGSG, and CKKCRGKT.

Belongs to the DnaJ family. Homodimer. Requires Zn(2+) as cofactor.

It localises to the cytoplasm. Its function is as follows. Participates actively in the response to hyperosmotic and heat shock by preventing the aggregation of stress-denatured proteins and by disaggregating proteins, also in an autonomous, DnaK-independent fashion. Unfolded proteins bind initially to DnaJ; upon interaction with the DnaJ-bound protein, DnaK hydrolyzes its bound ATP, resulting in the formation of a stable complex. GrpE releases ADP from DnaK; ATP binding to DnaK triggers the release of the substrate protein, thus completing the reaction cycle. Several rounds of ATP-dependent interactions between DnaJ, DnaK and GrpE are required for fully efficient folding. Also involved, together with DnaK and GrpE, in the DNA replication of plasmids through activation of initiation proteins. This chain is Chaperone protein DnaJ, found in Mesomycoplasma hyopneumoniae (strain 232) (Mycoplasma hyopneumoniae).